The sequence spans 1023 residues: Peroxisome proliferator-activated receptor gamma coactivator 1-beta (1023 aa).

Positions 1 to 91 (MAGNDCGALL…LFQIDSENEA (91 aa)) are abolishes DNA transcriptional activity when missing. The segment at 122–148 (LSCTSASPAPSSAPPSPAPEKPSAPAP) is disordered. The span at 132–146 (SSAPPSPAPEKPSAP) shows a compositional bias: pro residues. The LXXLL motif 1 signature appears at 156 to 160 (LQKLL). 3 disordered regions span residues 165 to 210 (YPTS…QSQS), 237 to 278 (LQSP…PGAP), and 302 to 331 (RKLPPQTPEPLPKACSNPSQQVRSRPWSRH). Residues 343–347 (LRELL) carry the LXXLL motif 2 motif. 4 disordered regions span residues 369–463 (LTPR…LPWT), 520–567 (RELG…QLPP), 601–623 (TAGLTPPTTPPYKPTEEDPFKPD), and 636–683 (LPSP…GQKR). Ser-384 is modified (phosphoserine). Positions 412-422 (LRLEVKREVRR) are enriched in basic and acidic residues. Positions 429–450 (QEEEDEEEEEEEEEEEKEEEEE) are enriched in acidic residues. A Phosphoserine modification is found at Ser-524. The span at 614 to 623 (PTEEDPFKPD) shows a compositional bias: basic and acidic residues. At Ser-638 the chain carries Phosphoserine. The HCFC1-binding-motif (HBM) signature appears at 691–694 (DHDY). 2 disordered regions span residues 717-758 (VHLE…LRDH) and 779-867 (DLAS…WSPA). Residues 793–805 (EDSSSSSGESSFL) are compositionally biased toward low complexity. Positions 806 to 825 (PEEEEEEGEEEEEDDEEEDS) are enriched in acidic residues. Residues 849 to 866 (CSRSRSSSGSSPCHSWSP) are compositionally biased toward low complexity. Positions 902–976 (RVVYIQNLSS…RNEPSFQLSY (75 aa)) constitute an RRM domain.

Interacts with hepatocyte nuclear factor 4-alpha/HNF4A, Sterol regulatory binding transcription factor 1/SREBF1, PPAR-alpha/PPARA, thyroid hormone receptor beta/THRB and host cell factor/HCFC1. Interacts with estrogen-related receptor gamma/ESRRG and alpha/ESRRA. Interacts with PRDM16. Interacts with estrogen receptor alpha/ESR1. Ubiquitous with higher expression in heart, brain and skeletal muscle.

Its subcellular location is the nucleus. Its function is as follows. Plays a role of stimulator of transcription factors and nuclear receptors activities. Activates transcriptional activity of estrogen receptor alpha, nuclear respiratory factor 1 (NRF1) and glucocorticoid receptor in the presence of glucocorticoids. May play a role in constitutive non-adrenergic-mediated mitochondrial biogenesis as suggested by increased basal oxygen consumption and mitochondrial number when overexpressed. May be involved in fat oxidation and non-oxidative glucose metabolism and in the regulation of energy expenditure. Induces the expression of PERM1 in the skeletal muscle in an ESRRA-dependent manner. The protein is Peroxisome proliferator-activated receptor gamma coactivator 1-beta (PPARGC1B) of Homo sapiens (Human).